The following is a 262-amino-acid chain: Small ribosomal subunit protein eS1 (262 aa).

Residues 1 to 18 (MAVGKNKRISKGKKGSKK) are compositionally biased toward basic residues. Positions 1–20 (MAVGKNKRISKGKKGSKKKT) are disordered.

The protein belongs to the eukaryotic ribosomal protein eS1 family. Component of the small ribosomal subunit. Mature ribosomes consist of a small (40S) and a large (60S) subunit. The 40S subunit contains about 33 different proteins and 1 molecule of RNA (18S). The 60S subunit contains about 49 different proteins and 3 molecules of RNA (25S, 5.8S and 5S).

It localises to the cytoplasm. The sequence is that of Small ribosomal subunit protein eS1 from Oryza sativa subsp. japonica (Rice).